The chain runs to 214 residues: Holliday junction branch migration complex subunit RuvA (214 aa).

The interval 1-63 is domain I; that stretch reads MISSLRGTVL…EDSLTLFGFP (63 aa). The interval 64–139 is domain II; the sequence is GPDELRAFEL…KLFVTQPRAR (76 aa). Residues 139–143 are flexible linker; it reads RSATS. Positions 144 to 214 are domain III; the sequence is AASTVTADVV…AAPTGQAADR (71 aa).

It belongs to the RuvA family. As to quaternary structure, homotetramer. Forms an RuvA(8)-RuvB(12)-Holliday junction (HJ) complex. HJ DNA is sandwiched between 2 RuvA tetramers; dsDNA enters through RuvA and exits via RuvB. An RuvB hexamer assembles on each DNA strand where it exits the tetramer. Each RuvB hexamer is contacted by two RuvA subunits (via domain III) on 2 adjacent RuvB subunits; this complex drives branch migration. In the full resolvosome a probable DNA-RuvA(4)-RuvB(12)-RuvC(2) complex forms which resolves the HJ.

The protein resides in the cytoplasm. The RuvA-RuvB-RuvC complex processes Holliday junction (HJ) DNA during genetic recombination and DNA repair, while the RuvA-RuvB complex plays an important role in the rescue of blocked DNA replication forks via replication fork reversal (RFR). RuvA specifically binds to HJ cruciform DNA, conferring on it an open structure. The RuvB hexamer acts as an ATP-dependent pump, pulling dsDNA into and through the RuvAB complex. HJ branch migration allows RuvC to scan DNA until it finds its consensus sequence, where it cleaves and resolves the cruciform DNA. The polypeptide is Holliday junction branch migration complex subunit RuvA (Clavibacter michiganensis subsp. michiganensis (strain NCPPB 382)).